The sequence spans 280 residues: Equatorin (280 aa).

Positions 1–19 are cleaved as a signal peptide; the sequence is MDFILLIFLSGVFLPNIFS. Residues 20–183 lie on the Vesicular side of the membrane; the sequence is LQPTVEQDPG…LSELEEIKLK (164 aa). The segment at 112-131 is disordered; sequence ATASGEEDKRSEPSRKSSTP. The span at 117 to 126 shows a compositional bias: basic and acidic residues; that stretch reads EEDKRSEPSR. An N-linked (GlcNAc...) asparagine glycan is attached at asparagine 145. The helical transmembrane segment at 184–204 threads the bilayer; the sequence is LMLGISLMTLILLIPLLIFCF. Topologically, residues 205-280 are cytoplasmic; sequence ATLYKLRHLR…AEVTEERISE (76 aa). Serine 279 is modified (phosphoserine).

In terms of assembly, interacts with SNAP25. Highly N- and O-glycosylated; contains sialic acid. As to expression, highly expressed in testis and epididymis. Low expression in other tissues.

The protein resides in the cytoplasmic vesicle. It localises to the secretory vesicle. It is found in the acrosome membrane. The protein localises to the acrosome inner membrane. Its subcellular location is the acrosome outer membrane. Acrosomal membrane-anchored protein involved in the process of fertilization and in acrosome biogenesis. The sequence is that of Equatorin (Eqtn) from Rattus norvegicus (Rat).